We begin with the raw amino-acid sequence, 236 residues long: Dense granule protein 7 (236 aa).

A signal peptide spans 1–26; the sequence is MARHAIFSALCVLGLVAAALPQFATA. The disordered stretch occupies residues 45-106; the sequence is DGQAPVDSLR…EVHFRKRGVR (62 aa). Over residues 70 to 80 the composition is skewed to polar residues; that stretch reads TTSMDKASVES. The required for dimerization, interactions with liposomes and liposome tubulation stretch occupies residues 147-236; the sequence is AVGMGASYFA…SGEDGEDARQ (90 aa). Residues 181–201 form a helical membrane-spanning segment; the sequence is VGTVLGFAALAAAAAFLGMGL. The segment at 208–236 is disordered; it reads FSPRKNRSRQPALEQEVPESGEDGEDARQ. N213 carries an N-linked (GlcNAc...) asparagine glycan. The segment covering 223–236 has biased composition (acidic residues); it reads EVPESGEDGEDARQ.

This sequence belongs to the Gra7 family. Homodimer. Can form higher order homooligomers in a lipid-stimulated manner. Component of a complex at least composed of ROP18, GRA7 and ROP2. Interacts with ROP5. Interacts with ROP18 in the absence of ROP5. Interacts with mouse IRGA6/IIGP1 in GTP-dependent manner; the interaction results in faster turnover of the GTP-activated IRGA6/IIGP1 oligomer. Interacts with mouse TRAF6 (via N-terminal RING domain); the interaction plays a role in GRA7-induced pro-inflammatory cytokine production in mouse macrophages.

Its subcellular location is the secreted. The protein resides in the parasitophorous vacuole lumen. It localises to the parasitophorous vacuole membrane. The protein localises to the cytoplasm. It is found in the host cytoplasm. Its subcellular location is the cytoplasmic vesicle. The protein resides in the secretory vesicle. Its function is as follows. Binds lipid bilayers, sequesters host endocytic organelles in the parasitophorous vacuole space, and causes their deformation and remodeling. Plays a role in nutrient acquisition from the host. In complex with ROP18, targets immunity-related GTPases (IRGs) to prevent IRG-mediated parasite killing by mouse cells. Important component within a kinase complex, contributing to phosphorylation of mouse IRGA6/IIGP1, an immunity-related GTPase that protects mice from infection by certain intracellular pathogens, by Toxoplasma gondii ROP5 and ROP18. Induces pro-inflammatory cytokine production in host macrophages. Activates host pro-inflammatory signaling pathways in a MyD88-dependent manner. Triggers generation of reactive oxygen species (ROS) in host cells. Activates MAPK pathway in host cells. Activates host NF-kappa-B signaling pathway by interacting with TRAF6 and modulating the 'Lys-63'-linked polyubiquitination of TRAF6. This Toxoplasma gondii protein is Dense granule protein 7.